An 829-amino-acid polypeptide reads, in one-letter code: G-type lectin S-receptor-like serine/threonine-protein kinase At1g34300 (829 aa).

The signal sequence occupies residues 1 to 25; the sequence is MAVKTPFLKLLPLLLLLLHFPFSFS. Bulb-type lectin domains follow at residues 26-140 and 143-260; these read TIPL…SSFD and TDTI…PVNA. The Extracellular segment spans residues 26–421; it reads TIPLGSVIYA…KGDDNNSKVH (396 aa). N-linked (GlcNAc...) asparagine glycosylation is found at asparagine 46, asparagine 98, asparagine 130, asparagine 151, asparagine 172, asparagine 178, asparagine 189, and asparagine 195. In terms of domain architecture, EGF-like spans 264–301; sequence AVDQCLVYGYCGNFGICSYNDTNPICSCPSRNFDFVDV. Disulfide bonds link cysteine 268–cysteine 280, cysteine 274–cysteine 289, cysteine 317–cysteine 399, cysteine 350–cysteine 373, and cysteine 354–cysteine 360. N-linked (GlcNAc...) asparagine glycosylation is found at asparagine 283 and asparagine 320. The Apple domain occupies 317 to 399; that stretch reads CSGNTTMLDL…VPSTSYVKVC (83 aa). N-linked (GlcNAc...) asparagine glycosylation occurs at asparagine 416. A helical transmembrane segment spans residues 422–442; it reads LWIVAVAVIAGLLGLVAVEIG. Over 443–829 the chain is Cytoplasmic; it reads LWWCCCRKNP…RISEGSMLGS (387 aa). The 276-residue stretch at 484-759 folds into the Protein kinase domain; sequence KSFKEKLGAG…GKVVQMLEGI (276 aa). Residues 490–498 and lysine 512 contribute to the ATP site; that span reads LGAGGFGTV. Serine 532 bears the Phosphoserine mark. The caM-binding stretch occupies residues 572 to 589; it reads DSAKFLTWEYRFNIALGT. The active-site Proton acceptor is the aspartate 608. Serine 625 and serine 799 each carry phosphoserine.

Belongs to the protein kinase superfamily. Ser/Thr protein kinase family.

The protein localises to the cell membrane. The enzyme catalyses L-seryl-[protein] + ATP = O-phospho-L-seryl-[protein] + ADP + H(+). It carries out the reaction L-threonyl-[protein] + ATP = O-phospho-L-threonyl-[protein] + ADP + H(+). The sequence is that of G-type lectin S-receptor-like serine/threonine-protein kinase At1g34300 from Arabidopsis thaliana (Mouse-ear cress).